A 335-amino-acid polypeptide reads, in one-letter code: Prepilin leader peptidase/N-methyltransferase (335 aa).

The chain crosses the membrane as a helical span at residues 13-33; it reads LFAVFLFVLGLCVGSFLNVVI. Zn(2+) contacts are provided by Cys49, Cys52, Cys74, and Cys77. 5 helical membrane passes run 105 to 125, 131 to 151, 206 to 226, 258 to 278, and 299 to 319; these read WTYE…LAFI, ILPL…AFPL, LLGV…LMLL, PGLP…VQPI, and IPFG…GPWL.

This sequence belongs to the peptidase A24 family. Zn(2+) serves as cofactor.

Its subcellular location is the cell inner membrane. It carries out the reaction Typically cleaves a -Gly-|-Phe- bond to release an N-terminal, basic peptide of 5-8 residues from type IV prepilin, and then N-methylates the new N-terminal amino group, the methyl donor being S-adenosyl-L-methionine.. In terms of biological role, plays an essential role in type IV pili and type II pseudopili formation by proteolytically removing the leader sequence from substrate proteins and subsequently monomethylating the alpha-amino group of the newly exposed N-terminal phenylalanine. The protein is Prepilin leader peptidase/N-methyltransferase (pilD) of Myxococcus xanthus (strain DK1622).